Consider the following 78-residue polypeptide: MSKFSLLDHELIPHHEIMDEDDLKTVLTHYNVEREQLPKLKVTDPIALEIGAEPGDVVKVIRKSQTAGEALYYRYVIG.

The protein belongs to the archaeal Rpo5/eukaryotic RPB5 RNA polymerase subunit family. As to quaternary structure, part of the RNA polymerase complex.

It localises to the cytoplasm. The enzyme catalyses RNA(n) + a ribonucleoside 5'-triphosphate = RNA(n+1) + diphosphate. In terms of biological role, DNA-dependent RNA polymerase (RNAP) catalyzes the transcription of DNA into RNA using the four ribonucleoside triphosphates as substrates. The polypeptide is DNA-directed RNA polymerase subunit Rpo5 (Methanococcoides burtonii (strain DSM 6242 / NBRC 107633 / OCM 468 / ACE-M)).